Here is an 801-residue protein sequence, read N- to C-terminus: Protein 4.1 (801 aa).

Positions 1–187 (MTTEKGLLAE…GESKASHKVV (187 aa)) are disordered. Residues 45–58 (EQSQESPSTTSPST) show a composition bias toward low complexity. Residues 88–107 (SDEKEVELLGEKGQDQKDVD) show a composition bias toward basic and acidic residues. Residues 108-117 (EGLGEQLEDD) show a composition bias toward acidic residues. Residues 141–151 (SLSSAETQPAQ) show a composition bias toward polar residues. Residues 154-166 (QKEDQDPEADCED) show a composition bias toward acidic residues. Residues 167–182 (VEGKEPIKKPEGESKA) are compositionally biased toward basic and acidic residues. In terms of domain architecture, FERM spans 193–474 (MRCKVTLLDD…EHHTFFRLTS (282 aa)). Positions 477-587 (SIPKHRFLSL…GMPNQRESPK (111 aa)) are hydrophilic. The segment at 516–613 (RTGSKRASRS…DKVKDLEKTQ (98 aa)) is disordered. Over residues 563–577 (RVEEMPKKTEEKPKE) the composition is skewed to basic and acidic residues. The tract at residues 588–651 (DVKATQQDSP…WDKRLSTHSP (64 aa)) is spectrin--actin-binding. Positions 591–601 (ATQQDSPSPTV) are enriched in polar residues. Basic and acidic residues predominate over residues 604–613 (DKVKDLEKTQ). The interval 653–801 (RTLSFNGQVQ…GVVHQETEIA (149 aa)) is C-terminal (CTD).

As to quaternary structure, binds with a high affinity to glycophorin and with lower affinity to band III protein. Associates with the nuclear mitotic apparatus. Binds calmodulin. Post-translationally, phosphorylated at multiple sites by different protein kinases and each phosphorylation event selectively modulates the protein's functions. In terms of tissue distribution, found exclusively in photoreceptors following the terminal mitosis of retinal neurons. When retinal synaptogenesis is complete, protein 4.1 is also expressed in the inner retina. In adult amphibian retinas, protein 4.1 is detected in photoreceptors, bipolar cells, and ganglion cell axons.

It is found in the nucleus. It localises to the cytoplasm. Its subcellular location is the cytoskeleton. The protein resides in the cell cortex. Protein 4.1 is a major structural element of the erythrocyte membrane skeleton. It plays a key role in regulating membrane physical properties of mechanical stability and deformability by stabilizing spectrin-actin interaction. May be required for dynein-dynactin complex and NUMA1 recruitment at the mitotic cell cortex during anaphase. The protein is Protein 4.1 of Xenopus laevis (African clawed frog).